The chain runs to 233 residues: Orotidine 5'-phosphate decarboxylase (233 aa).

Substrate-binding positions include Asp11, Lys34, 61 to 70 (DLKLHDIPNT), Thr117, Arg179, Gln189, Gly209, and Arg210. Lys63 serves as the catalytic Proton donor.

It belongs to the OMP decarboxylase family. Type 1 subfamily. In terms of assembly, homodimer.

It carries out the reaction orotidine 5'-phosphate + H(+) = UMP + CO2. It participates in pyrimidine metabolism; UMP biosynthesis via de novo pathway; UMP from orotate: step 2/2. Functionally, catalyzes the decarboxylation of orotidine 5'-monophosphate (OMP) to uridine 5'-monophosphate (UMP). The protein is Orotidine 5'-phosphate decarboxylase of Streptococcus agalactiae serotype V (strain ATCC BAA-611 / 2603 V/R).